A 430-amino-acid polypeptide reads, in one-letter code: Enolase (430 aa).

(2R)-2-phosphoglycerate is bound at residue glutamine 163. Glutamate 205 (proton donor) is an active-site residue. Mg(2+) is bound by residues aspartate 242, glutamate 285, and aspartate 312. (2R)-2-phosphoglycerate is bound by residues lysine 337, arginine 366, serine 367, and lysine 388. The active-site Proton acceptor is lysine 337.

Belongs to the enolase family. Mg(2+) serves as cofactor.

It localises to the cytoplasm. The protein resides in the secreted. The protein localises to the cell surface. It catalyses the reaction (2R)-2-phosphoglycerate = phosphoenolpyruvate + H2O. Its pathway is carbohydrate degradation; glycolysis; pyruvate from D-glyceraldehyde 3-phosphate: step 4/5. In terms of biological role, catalyzes the reversible conversion of 2-phosphoglycerate (2-PG) into phosphoenolpyruvate (PEP). It is essential for the degradation of carbohydrates via glycolysis. This Maridesulfovibrio salexigens (strain ATCC 14822 / DSM 2638 / NCIMB 8403 / VKM B-1763) (Desulfovibrio salexigens) protein is Enolase.